The primary structure comprises 378 residues: Cysteine synthase (378 aa).

The tract at residues 10 to 31 is disordered; sequence NSEGDSNQQQNNNNNSNNNLKE. A compositionally biased stretch (low complexity) spans 15 to 28; the sequence is SNQQQNNNNNSNNN. Lys-79 is subject to N6-(pyridoxal phosphate)lysine. Pyridoxal 5'-phosphate-binding positions include 215 to 219 and Ser-319; that span reads GTGGT.

Belongs to the cysteine synthase/cystathionine beta-synthase family. The cofactor is pyridoxal 5'-phosphate.

The enzyme catalyses O-acetyl-L-serine + hydrogen sulfide = L-cysteine + acetate. Its pathway is amino-acid biosynthesis; L-cysteine biosynthesis; L-cysteine from L-serine: step 2/2. The protein is Cysteine synthase (cysK) of Dictyostelium discoideum (Social amoeba).